A 329-amino-acid chain; its full sequence is Eukaryotic translation initiation factor 3 subunit I (329 aa).

5 WD repeats span residues 8–47 (GHQR…RLGT), 50–89 (GHGG…NIAT), 145–184 (ITDS…KIHS), 187–226 (EHTH…LLKE), and 284–323 (GHFG…FDYT).

Belongs to the eIF-3 subunit I family. Component of the eukaryotic translation initiation factor 3 (eIF-3) complex.

The protein localises to the cytoplasm. Its function is as follows. Component of the eukaryotic translation initiation factor 3 (eIF-3) complex, which is involved in protein synthesis of a specialized repertoire of mRNAs and, together with other initiation factors, stimulates binding of mRNA and methionyl-tRNAi to the 40S ribosome. The eIF-3 complex specifically targets and initiates translation of a subset of mRNAs involved in cell proliferation. This Bombyx mori (Silk moth) protein is Eukaryotic translation initiation factor 3 subunit I.